Consider the following 204-residue polypeptide: ADP-ribosylation factor-like protein 15 (204 aa).

Residues 39–46, 82–86, and 142–145 contribute to the GTP site; these read GLTGSGKT, ELGGA, and NHQD.

It belongs to the small GTPase superfamily. Arf family.

The polypeptide is ADP-ribosylation factor-like protein 15 (ARL15) (Homo sapiens (Human)).